Reading from the N-terminus, the 352-residue chain is MASEDVKRTESAAVSTIVNLAEEAREGVKAPSYAFKSICKSLFAGGVAGGVSRTAVAPLERMKILLQVQNPHNIKYSGTVQGLKHIWRTEGLRGLFKGNGTNCARIVPNSAVKFFSYEQASNGILYMYRQRTGNENAQLTPLLRLGAGATAGIIAMSATYPMDMVRGRLTVQTANSPYQYRGIAHALATVLREEGPRALYRGWLPSVIGVVPYVGLNFSVYESLKDWLVKENPYGLVENNELTVVTRLTCGAIAGTVGQTIAYPLDVIRRRMQMVGWKDASAIVTGEGRSTASLEYTGMVDAFRKTVRHEGFGALYKGLVPNSVKVVPSIAIAFVTYEMVKDVLGVEFRISD.

Solcar repeat units lie at residues Lys-36–Gly-123, Leu-139–Trp-227, and Leu-242–Val-343. The next 6 helical transmembrane spans lie at Ser-41–Arg-61, Gly-100–Ala-120, Leu-145–Met-162, Gly-202–Tyr-221, Leu-242–Tyr-263, and Val-324–Val-340.

This sequence belongs to the mitochondrial carrier (TC 2.A.29) family. Expressed in seedling radicles and roots, vasculature of cotyledons, leaf primordia, leaves and sepals.

It localises to the mitochondrion inner membrane. Inhibited by pyridoxal 5-phosphate, bathophenanthroline, mersalyl, p-hydroxymercuribenzoate and tannic acid. In terms of biological role, mitochondrial adenylate carrier that catalyzes specifically the transport of ATP, ADP and AMP by a counter-exchange mechanism across the inner mitochondrial membrane. Substrate preference in reconstituted proteoliposomes is ATP &gt; AMP &gt; ADP. May play a role in oxidative phosphorylation and be important for the provision of energy required to support growth in heterotrophic tissues. The polypeptide is Mitochondrial adenine nucleotide transporter ADNT1 (ADNT1) (Arabidopsis thaliana (Mouse-ear cress)).